The chain runs to 209 residues: Small ribosomal subunit protein uS4 (209 aa).

The S4 RNA-binding domain maps to 99–160; that stretch reads RRLDNVVYRL…GSKEMTLLGQ (62 aa).

This sequence belongs to the universal ribosomal protein uS4 family. Part of the 30S ribosomal subunit. Contacts protein S5. The interaction surface between S4 and S5 is involved in control of translational fidelity.

In terms of biological role, one of the primary rRNA binding proteins, it binds directly to 16S rRNA where it nucleates assembly of the body of the 30S subunit. Its function is as follows. With S5 and S12 plays an important role in translational accuracy. In Koribacter versatilis (strain Ellin345), this protein is Small ribosomal subunit protein uS4.